The following is a 122-amino-acid chain: MIAKTVAILALAGSAAAYAPTMSLSANRRELVQGAAAAAVVAPMLRPTGASAKDAQLRAPVVTIFDARGCKDHANKEYTDPKAGNAENDECCVKVQMTPIKVADDAAALVLKECLSELKGKK.

Positions 54 and 68 each coordinate (2R,3E)-phycocyanobilin. Mesobiliverdin is bound by residues Cys70, Lys76, Glu77, and Cys92.

The protein belongs to the phycoerythrin family. As to quaternary structure, heterotetramer of 2 different alpha chains and 2 identical beta chains which form 2 alpha-beta heterodimers within the heterotetramer. Contains two phycocyanobilin chromophores and one mesobiliverdin chromophore with binding mediated by both the alpha and beta subunits.

The protein resides in the plastid. It is found in the chloroplast thylakoid membrane. Its function is as follows. Light-harvesting photosynthetic tetrapyrrole chromophore-protein from the phycobiliprotein complex. The sequence is that of Phycocyanin PC645 alpha-2 subunit from Chroomonas sp. (strain CCMP270).